Reading from the N-terminus, the 293-residue chain is 4-hydroxy-tetrahydrodipicolinate synthase (293 aa).

T44 contributes to the pyruvate binding site. The active-site Proton donor/acceptor is the Y132. Residue K161 is the Schiff-base intermediate with substrate of the active site. I205 contacts pyruvate.

This sequence belongs to the DapA family. As to quaternary structure, homotetramer; dimer of dimers.

It localises to the cytoplasm. The catalysed reaction is L-aspartate 4-semialdehyde + pyruvate = (2S,4S)-4-hydroxy-2,3,4,5-tetrahydrodipicolinate + H2O + H(+). Its pathway is amino-acid biosynthesis; L-lysine biosynthesis via DAP pathway; (S)-tetrahydrodipicolinate from L-aspartate: step 3/4. Its function is as follows. Catalyzes the condensation of (S)-aspartate-beta-semialdehyde [(S)-ASA] and pyruvate to 4-hydroxy-tetrahydrodipicolinate (HTPA). This Thermosipho africanus (strain TCF52B) protein is 4-hydroxy-tetrahydrodipicolinate synthase.